The chain runs to 600 residues: DDB1- and CUL4-associated factor 15 (600 aa).

The interval Met1–Val29 is disordered. The span at Gly14 to Arg27 shows a compositional bias: gly residues. Position 50 is a phosphoserine (Ser50). Positions 193, 196, 211, and 214 each coordinate Zn(2+). The residue at position 314 (Ser314) is a Phosphoserine. A compositionally biased stretch (basic and acidic residues) spans Ala334–Arg343. A disordered region spans residues Ala334–Pro384. 2 stretches are compositionally biased toward low complexity: residues Leu344–Leu359 and Pro374–Pro384.

In terms of assembly, component of the DCX(DCAF15) complex, also named CLR4(DCAF15) complex, composed of DCAF15, DDB1, cullin-4 (CUL4A or CUL4B), DDA1 and RBX1.

It functions in the pathway protein modification; protein ubiquitination. Substrate-recognition component of the DCX(DCAF15) complex, a cullin-4-RING E3 ubiquitin-protein ligase complex that mediates ubiquitination and degradation of target proteins. The DCX(DCAF15) complex acts as a regulator of the natural killer (NK) cells effector functions, possibly by mediating ubiquitination and degradation of cohesin subunits SMC1A and SMC3. May play a role in the activation of antigen-presenting cells (APC) and their interaction with NK cells. In Mus musculus (Mouse), this protein is DDB1- and CUL4-associated factor 15.